Here is a 154-residue protein sequence, read N- to C-terminus: MATFVQKPAEVEKKWILIDAEGLVVGRLASLIANRLRGKHKATYTPHVDDGDNVIVINAEKAVLTGKKYTDKKYYWHTGYPGGIKERTARQIIEGRFPERVIEKAVERMVPRGPLGRRQMKNLRVYAGSNHPHEAQQPTVLDVAKLNNKNTRSA.

It belongs to the universal ribosomal protein uL13 family. In terms of assembly, part of the 50S ribosomal subunit.

Functionally, this protein is one of the early assembly proteins of the 50S ribosomal subunit, although it is not seen to bind rRNA by itself. It is important during the early stages of 50S assembly. The chain is Large ribosomal subunit protein uL13 from Sinorhizobium medicae (strain WSM419) (Ensifer medicae).